Consider the following 283-residue polypeptide: 5'-nucleotidase SurE (283 aa).

A divalent metal cation is bound by residues D14, D15, S47, and N105.

Belongs to the SurE nucleotidase family. Requires a divalent metal cation as cofactor.

The protein resides in the cytoplasm. The catalysed reaction is a ribonucleoside 5'-phosphate + H2O = a ribonucleoside + phosphate. Its function is as follows. Nucleotidase that shows phosphatase activity on nucleoside 5'-monophosphates. The sequence is that of 5'-nucleotidase SurE from Chlamydia trachomatis serovar A (strain ATCC VR-571B / DSM 19440 / HAR-13).